A 126-amino-acid chain; its full sequence is Small ribosomal subunit protein uS12c (126 aa).

The protein belongs to the universal ribosomal protein uS12 family. As to quaternary structure, part of the 30S ribosomal subunit.

Its subcellular location is the plastid. It localises to the chloroplast. In terms of biological role, with S4 and S5 plays an important role in translational accuracy. Located at the interface of the 30S and 50S subunits. The sequence is that of Small ribosomal subunit protein uS12c (rps12) from Trieres chinensis (Marine centric diatom).